A 589-amino-acid polypeptide reads, in one-letter code: uncharacterized protein (589 aa).

Disordered regions lie at residues 328–365 (LSSTSDASAAPAGVAGGGKARQMQFSQGGSGQGAEDGP), 379–459 (SLLG…DPSN), 525–555 (RSTSRLDAGEGQGDDDDEEDGQAEKYEGAVK), and 569–589 (VRGTKVVVQPSPPGDDSSRDM). Residues 398 to 425 (VSLSSASTSARPTQRRSSLTPCSQTPQE) are compositionally biased toward polar residues. A compositionally biased stretch (basic and acidic residues) spans 426–445 (THQHAREALTTRMESQREAN). Residues 536–545 (QGDDDDEEDG) are compositionally biased toward acidic residues.

This is an uncharacterized protein from Mycosarcoma maydis (Corn smut fungus).